The sequence spans 635 residues: Chaperone protein HtpG (635 aa).

Residues 1-337 are a; substrate-binding; that stretch reads MELKMHNVQE…SPDLPLNISR (337 aa). The tract at residues 338-556 is b; that stretch reads ETLQNNRVVE…EGAMDLRMER (219 aa). Positions 557–635 are c; sequence FLREQKQLNY…LNNLLGKISV (79 aa).

It belongs to the heat shock protein 90 family. In terms of assembly, homodimer.

Its subcellular location is the cytoplasm. Molecular chaperone. Has ATPase activity. This is Chaperone protein HtpG from Wolbachia pipientis wMel.